Consider the following 80-residue polypeptide: uncharacterized protein (80 aa).

This sequence belongs to the BolA/IbaG family.

This is an uncharacterized protein from Buchnera aphidicola subsp. Schizaphis graminum (strain Sg).